Consider the following 404-residue polypeptide: Formate-dependent phosphoribosylglycinamide formyltransferase (404 aa).

N(1)-(5-phospho-beta-D-ribosyl)glycinamide-binding positions include 25-26 (EL) and Glu-85. ATP is bound by residues Arg-118, Lys-159, 164-169 (SSGKGQ), 199-202 (EGFV), and Glu-207. One can recognise an ATP-grasp domain in the interval 123 to 318 (RLAAEELGLP…EFELHARAIL (196 aa)). Mg(2+) is bound by residues Glu-277 and Glu-289. N(1)-(5-phospho-beta-D-ribosyl)glycinamide is bound by residues Asp-296, Lys-365, and 372–373 (RR).

The protein belongs to the PurK/PurT family. As to quaternary structure, homodimer.

It carries out the reaction N(1)-(5-phospho-beta-D-ribosyl)glycinamide + formate + ATP = N(2)-formyl-N(1)-(5-phospho-beta-D-ribosyl)glycinamide + ADP + phosphate + H(+). It participates in purine metabolism; IMP biosynthesis via de novo pathway; N(2)-formyl-N(1)-(5-phospho-D-ribosyl)glycinamide from N(1)-(5-phospho-D-ribosyl)glycinamide (formate route): step 1/1. Its function is as follows. Involved in the de novo purine biosynthesis. Catalyzes the transfer of formate to 5-phospho-ribosyl-glycinamide (GAR), producing 5-phospho-ribosyl-N-formylglycinamide (FGAR). Formate is provided by PurU via hydrolysis of 10-formyl-tetrahydrofolate. The polypeptide is Formate-dependent phosphoribosylglycinamide formyltransferase (Burkholderia thailandensis (strain ATCC 700388 / DSM 13276 / CCUG 48851 / CIP 106301 / E264)).